Reading from the N-terminus, the 155-residue chain is SsrA-binding protein (155 aa).

The protein belongs to the SmpB family.

The protein resides in the cytoplasm. In terms of biological role, required for rescue of stalled ribosomes mediated by trans-translation. Binds to transfer-messenger RNA (tmRNA), required for stable association of tmRNA with ribosomes. tmRNA and SmpB together mimic tRNA shape, replacing the anticodon stem-loop with SmpB. tmRNA is encoded by the ssrA gene; the 2 termini fold to resemble tRNA(Ala) and it encodes a 'tag peptide', a short internal open reading frame. During trans-translation Ala-aminoacylated tmRNA acts like a tRNA, entering the A-site of stalled ribosomes, displacing the stalled mRNA. The ribosome then switches to translate the ORF on the tmRNA; the nascent peptide is terminated with the 'tag peptide' encoded by the tmRNA and targeted for degradation. The ribosome is freed to recommence translation, which seems to be the essential function of trans-translation. The sequence is that of SsrA-binding protein from Streptococcus uberis (strain ATCC BAA-854 / 0140J).